The primary structure comprises 417 residues: NADH-quinone oxidoreductase subunit D (417 aa).

The protein belongs to the complex I 49 kDa subunit family. As to quaternary structure, NDH-1 is composed of 14 different subunits. Subunits NuoB, C, D, E, F, and G constitute the peripheral sector of the complex.

It localises to the cell inner membrane. The catalysed reaction is a quinone + NADH + 5 H(+)(in) = a quinol + NAD(+) + 4 H(+)(out). NDH-1 shuttles electrons from NADH, via FMN and iron-sulfur (Fe-S) centers, to quinones in the respiratory chain. The immediate electron acceptor for the enzyme in this species is believed to be ubiquinone. Couples the redox reaction to proton translocation (for every two electrons transferred, four hydrogen ions are translocated across the cytoplasmic membrane), and thus conserves the redox energy in a proton gradient. This Ruthia magnifica subsp. Calyptogena magnifica protein is NADH-quinone oxidoreductase subunit D.